The sequence spans 372 residues: Tryptophan--tRNA ligase (372 aa).

The 'HIGH' region signature appears at 79–87 (PSGKFHFGH). Positions 247–268 (KLQPGLDGRKMSSSRPDSTIFL) are disordered. A 'KMSKS' region motif is present at residues 256 to 260 (KMSSS). Polar residues predominate over residues 257 to 267 (MSSSRPDSTIF).

Belongs to the class-I aminoacyl-tRNA synthetase family.

Its subcellular location is the cytoplasm. The catalysed reaction is tRNA(Trp) + L-tryptophan + ATP = L-tryptophyl-tRNA(Trp) + AMP + diphosphate + H(+). The protein is Tryptophan--tRNA ligase of Aeropyrum pernix (strain ATCC 700893 / DSM 11879 / JCM 9820 / NBRC 100138 / K1).